A 241-amino-acid chain; its full sequence is MFLQTYETYNSINDRDLKEKNVVVIDTLRATSVITTALFNGAKEVIPVSEVEEAIELSKNFDRDTFLLAGERNSQKIEGFDLSNSPLEYVPEKVKGKTIIFTTTNGTRALKKVASAEEVILGCLLNVSAVARYISKSNKDTVIVCAGTEGKFSFDDILTAGAIYEKLKSLTDFESDDLSKASYFLYKPYENNLYDIMKYGYHLRRLEELGYTEDIKFCLTVDKFDIVPKLKNGIVRTSQDF.

The protein belongs to the ComB family. The cofactor is Mg(2+).

The catalysed reaction is (2R)-O-phospho-3-sulfolactate + H2O = (2R)-3-sulfolactate + phosphate. The protein is Probable 2-phosphosulfolactate phosphatase of Caldanaerobacter subterraneus subsp. tengcongensis (strain DSM 15242 / JCM 11007 / NBRC 100824 / MB4) (Thermoanaerobacter tengcongensis).